A 62-amino-acid polypeptide reads, in one-letter code: Large ribosomal subunit protein bL28 (62 aa).

Belongs to the bacterial ribosomal protein bL28 family.

The polypeptide is Large ribosomal subunit protein bL28 (Helicobacter pylori (strain Shi470)).